A 697-amino-acid polypeptide reads, in one-letter code: Long-chain-fatty-acid--CoA ligase 6 (697 aa).

A helical; Signal-anchor for type III membrane protein transmembrane segment spans residues 25–45; the sequence is LSATTLVSMGALAAILAYWLT. Topologically, residues 46-697 are cytoplasmic; the sequence is HRPKALQPPC…QIEELYSISM (652 aa).

The protein belongs to the ATP-dependent AMP-binding enzyme family. Mg(2+) serves as cofactor. As to expression, expressed predominantly in brain and, to a much lesser extent, in heart and adrenal.

The protein resides in the mitochondrion outer membrane. Its subcellular location is the peroxisome membrane. It is found in the microsome membrane. The protein localises to the endoplasmic reticulum membrane. It carries out the reaction a long-chain fatty acid + ATP + CoA = a long-chain fatty acyl-CoA + AMP + diphosphate. The catalysed reaction is (5Z,8Z,11Z,14Z)-eicosatetraenoate + ATP + CoA = (5Z,8Z,11Z,14Z)-eicosatetraenoyl-CoA + AMP + diphosphate. It catalyses the reaction 15-hydroxy-(5Z,8Z,11Z,13E)-eicosatetraenoate + ATP + CoA = 15-hydroxy-(5Z,8Z,11Z,13E)-eicosatetraenoyl-CoA + AMP + diphosphate. The enzyme catalyses 12-hydroxy-(5Z,8Z,10E,14Z)-eicosatetraenoate + ATP + CoA = 12-hydroxy-(5Z,8Z,10E,14Z)-eicosatetraenoyl-CoA + AMP + diphosphate. It carries out the reaction 5-hydroxy-(6E,8Z,11Z,14Z)-eicosatetraenoate + ATP + CoA = 5-hydroxy-(6E,8Z,11Z,14Z)-eicosatetraenoyl-CoA + AMP + diphosphate. The catalysed reaction is hexadecanoate + ATP + CoA = hexadecanoyl-CoA + AMP + diphosphate. It catalyses the reaction (E)-hexadec-2-enoate + ATP + CoA = (2E)-hexadecenoyl-CoA + AMP + diphosphate. Catalyzes the conversion of long-chain fatty acids to their active form acyl-CoA for both synthesis of cellular lipids, and degradation via beta-oxidation. Plays an important role in fatty acid metabolism in brain and the acyl-CoAs produced may be utilized exclusively for the synthesis of the brain lipid. In Rattus norvegicus (Rat), this protein is Long-chain-fatty-acid--CoA ligase 6.